The following is a 605-amino-acid chain: Elongation factor 4 (605 aa).

The tr-type G domain occupies 9–192 (GMIRNFCIIA…AIVQRIPAPA (184 aa)). Residues 21–26 (DHGKST) and 139–142 (NKID) each bind GTP.

It belongs to the TRAFAC class translation factor GTPase superfamily. Classic translation factor GTPase family. LepA subfamily.

It localises to the cell inner membrane. It carries out the reaction GTP + H2O = GDP + phosphate + H(+). Required for accurate and efficient protein synthesis under certain stress conditions. May act as a fidelity factor of the translation reaction, by catalyzing a one-codon backward translocation of tRNAs on improperly translocated ribosomes. Back-translocation proceeds from a post-translocation (POST) complex to a pre-translocation (PRE) complex, thus giving elongation factor G a second chance to translocate the tRNAs correctly. Binds to ribosomes in a GTP-dependent manner. The polypeptide is Elongation factor 4 (Chlorobaculum parvum (strain DSM 263 / NCIMB 8327) (Chlorobium vibrioforme subsp. thiosulfatophilum)).